Here is a 212-residue protein sequence, read N- to C-terminus: Ribosomal RNA small subunit methyltransferase G (212 aa).

S-adenosyl-L-methionine is bound by residues glycine 80, leucine 85, 131 to 132, and arginine 146; that span reads AE.

The protein belongs to the methyltransferase superfamily. RNA methyltransferase RsmG family.

It localises to the cytoplasm. It carries out the reaction guanosine(527) in 16S rRNA + S-adenosyl-L-methionine = N(7)-methylguanosine(527) in 16S rRNA + S-adenosyl-L-homocysteine. Specifically methylates the N7 position of guanine in position 527 of 16S rRNA. In Xylella fastidiosa (strain 9a5c), this protein is Ribosomal RNA small subunit methyltransferase G.